A 350-amino-acid polypeptide reads, in one-letter code: MSKVGIVSWGAYIPKYRIRTEEVARIWGDDPLRIVDVYLVDEKSVESLDEDAVTIAVEAARRALKRAGINPKRIGAVYVGTESKPYAVKPISSILVDALGLSNNVFAVDMEFACKAGSEGLVAAIGLVESGRIEYGMTVGTDTSQGEPGEHLEYSASSGGASLIVGRDGVVAELEAVYSYVSDTPDFWRREGSPYPMHGEGFTGEPAYFRHIIGAARGLMERYGYKPSDFAYVVFHQPNGRFPVRAASMLNIPMEKVKPGIVVTHIGNTYNASALMGFAKVLDIAKPGDKILLVPFGSGAGSNAFVFTVTELITERQKSGVPTVEDMLRDKIYIDYAQYLKMRKMIKLFE.

Aspartate 30 lines the (3S)-3-hydroxy-3-methylglutaryl-CoA pocket. Catalysis depends on glutamate 82, which acts as the Proton donor/acceptor. Residues cysteine 114, serine 155, threonine 203, and histidine 236 each contribute to the (3S)-3-hydroxy-3-methylglutaryl-CoA site. The active-site Acyl-thioester intermediate is the cysteine 114. Residue histidine 236 is the Proton donor/acceptor of the active site. Residue arginine 241 participates in CoA binding. Arginine 245, asparagine 268, and serine 298 together coordinate (3S)-3-hydroxy-3-methylglutaryl-CoA.

It belongs to the thiolase-like superfamily. Archaeal HMG-CoA synthase family. Interacts with acetoacetyl-CoA thiolase that catalyzes the precedent step in the pathway and with a DUF35 protein. The acetoacetyl-CoA thiolase/HMG-CoA synthase complex channels the intermediate via a fused CoA-binding site, which allows for efficient coupling of the endergonic thiolase reaction with the exergonic HMGCS reaction.

It carries out the reaction acetoacetyl-CoA + acetyl-CoA + H2O = (3S)-3-hydroxy-3-methylglutaryl-CoA + CoA + H(+). It participates in metabolic intermediate biosynthesis; (R)-mevalonate biosynthesis; (R)-mevalonate from acetyl-CoA: step 2/3. Functionally, catalyzes the condensation of acetyl-CoA with acetoacetyl-CoA to form 3-hydroxy-3-methylglutaryl-CoA (HMG-CoA). Functions in the mevalonate (MVA) pathway leading to isopentenyl diphosphate (IPP), a key precursor for the biosynthesis of isoprenoid compounds that are building blocks of archaeal membrane lipids. This is Hydroxymethylglutaryl-CoA synthase from Pyrobaculum aerophilum (strain ATCC 51768 / DSM 7523 / JCM 9630 / CIP 104966 / NBRC 100827 / IM2).